We begin with the raw amino-acid sequence, 372 residues long: Glutamate 5-kinase (372 aa).

K14 is an ATP binding site. Substrate-binding residues include S54, D141, and N153. ATP contacts are provided by residues 173-174 (TD) and 215-221 (TGGMATK). The 79-residue stretch at 280 to 358 (RGQVVLDTGA…DNIEEILGYD (79 aa)) folds into the PUA domain.

It belongs to the glutamate 5-kinase family.

It is found in the cytoplasm. It carries out the reaction L-glutamate + ATP = L-glutamyl 5-phosphate + ADP. The protein operates within amino-acid biosynthesis; L-proline biosynthesis; L-glutamate 5-semialdehyde from L-glutamate: step 1/2. Its function is as follows. Catalyzes the transfer of a phosphate group to glutamate to form L-glutamate 5-phosphate. This chain is Glutamate 5-kinase, found in Shewanella halifaxensis (strain HAW-EB4).